The sequence spans 652 residues: Acetyl-coenzyme A synthetase (652 aa).

Residues 191–194 (RAGR), threonine 311, and asparagine 335 contribute to the CoA site. Residues 387-389 (GEP), 411-416 (DTWWQT), aspartate 500, and arginine 515 contribute to the ATP site. Serine 523 is a binding site for CoA. An ATP-binding site is contributed by arginine 526. 3 residues coordinate Mg(2+): valine 537, histidine 539, and isoleucine 542. A CoA-binding site is contributed by arginine 584. Lysine 609 is subject to N6-acetyllysine; by autocatalysis.

The protein belongs to the ATP-dependent AMP-binding enzyme family. In terms of assembly, forms a 1:1 complex with CobB/NAD-dependent deacetylase. The cofactor is Mg(2+). Post-translationally, autoacetylated. Deacetylation by CobB activates the enzyme.

The enzyme catalyses acetate + ATP + CoA = acetyl-CoA + AMP + diphosphate. Its function is as follows. Catalyzes the conversion of acetate into acetyl-CoA (AcCoA), an essential intermediate at the junction of anabolic and catabolic pathways. Acs undergoes a two-step reaction. In the first half reaction, Acs combines acetate with ATP to form acetyl-adenylate (AcAMP) intermediate. In the second half reaction, it can then transfer the acetyl group from AcAMP to the sulfhydryl group of CoA, forming the product AcCoA. Functionally, enables the cell to use acetate during aerobic growth to generate energy via the TCA cycle, and biosynthetic compounds via the glyoxylate shunt. Acetylates CheY, the response regulator involved in flagellar movement and chemotaxis. The protein is Acetyl-coenzyme A synthetase of Escherichia coli (strain K12).